Here is a 464-residue protein sequence, read N- to C-terminus: Soluble pyridine nucleotide transhydrogenase (464 aa).

Residue 35 to 44 (EDKSQVGGNC) participates in FAD binding.

It belongs to the class-I pyridine nucleotide-disulfide oxidoreductase family. Requires FAD as cofactor.

The protein localises to the cytoplasm. It catalyses the reaction NAD(+) + NADPH = NADH + NADP(+). Functionally, conversion of NADPH, generated by peripheral catabolic pathways, to NADH, which can enter the respiratory chain for energy generation. The chain is Soluble pyridine nucleotide transhydrogenase from Hahella chejuensis (strain KCTC 2396).